The primary structure comprises 163 residues: Nucleotide-binding protein Dde_2479 (163 aa).

This sequence belongs to the YajQ family.

Its function is as follows. Nucleotide-binding protein. The chain is Nucleotide-binding protein Dde_2479 from Oleidesulfovibrio alaskensis (strain ATCC BAA-1058 / DSM 17464 / G20) (Desulfovibrio alaskensis).